We begin with the raw amino-acid sequence, 344 residues long: N-acetyl-gamma-glutamyl-phosphate reductase (344 aa).

The active site involves Cys148.

It belongs to the NAGSA dehydrogenase family. Type 1 subfamily.

The protein resides in the cytoplasm. It carries out the reaction N-acetyl-L-glutamate 5-semialdehyde + phosphate + NADP(+) = N-acetyl-L-glutamyl 5-phosphate + NADPH + H(+). It participates in amino-acid biosynthesis; L-arginine biosynthesis; N(2)-acetyl-L-ornithine from L-glutamate: step 3/4. In terms of biological role, catalyzes the NADPH-dependent reduction of N-acetyl-5-glutamyl phosphate to yield N-acetyl-L-glutamate 5-semialdehyde. This chain is N-acetyl-gamma-glutamyl-phosphate reductase, found in Clostridium botulinum (strain Alaska E43 / Type E3).